Reading from the N-terminus, the 165-residue chain is Cytochrome c-type biogenesis protein CcmE (165 aa).

The Cytoplasmic segment spans residues 1–7 (MTRKQKR). A helical; Signal-anchor for type II membrane protein membrane pass occupies residues 8 to 28 (LAIIGGGMSFIVAAVLLVMFA). The Periplasmic portion of the chain corresponds to 29-165 (FGQSIAYFYM…ASGDKTGATK (137 aa)). 2 residues coordinate heme: His123 and Tyr127. Residues 138 to 165 (DKGLWQQGAEGAAPAASAASGDKTGATK) are disordered. Residues 145–158 (GAEGAAPAASAASG) show a composition bias toward low complexity.

The protein belongs to the CcmE/CycJ family.

It localises to the cell inner membrane. Its function is as follows. Heme chaperone required for the biogenesis of c-type cytochromes. Transiently binds heme delivered by CcmC and transfers the heme to apo-cytochromes in a process facilitated by CcmF and CcmH. This chain is Cytochrome c-type biogenesis protein CcmE, found in Agrobacterium fabrum (strain C58 / ATCC 33970) (Agrobacterium tumefaciens (strain C58)).